Reading from the N-terminus, the 511-residue chain is Coatomer subunit delta (511 aa).

Basic and acidic residues predominate over residues 168 to 177; it reads QARRDAERQG. The interval 168 to 188 is disordered; the sequence is QARRDAERQGKKAPGFGGFGS. Position 223 is a phosphoserine (Ser-223). N6-acetyllysine occurs at positions 233 and 241. Ser-244 carries the phosphoserine modification. In terms of domain architecture, MHD spans 271–511; it reads MESVHMKIEE…TFLVDKYEIL (241 aa). N6-acetyllysine is present on residues Lys-309 and Lys-351. Ser-493 carries the phosphoserine modification.

This sequence belongs to the adaptor complexes medium subunit family. Delta-COP subfamily. As to quaternary structure, oligomeric complex that consists of at least the alpha, beta, beta', gamma, delta, epsilon and zeta subunits.

It is found in the cytoplasm. Its subcellular location is the golgi apparatus membrane. The protein resides in the cytoplasmic vesicle. It localises to the COPI-coated vesicle membrane. Its function is as follows. The coatomer is a cytosolic protein complex that binds to dilysine motifs and reversibly associates with Golgi non-clathrin-coated vesicles, which further mediate biosynthetic protein transport from the ER, via the Golgi up to the trans Golgi network. Coatomer complex is required for budding from Golgi membranes, and is essential for the retrograde Golgi-to-ER transport of dilysine-tagged proteins. In mammals, the coatomer can only be recruited by membranes associated to ADP-ribosylation factors (ARFs), which are small GTP-binding proteins; the complex also influences the Golgi structural integrity, as well as the processing, activity, and endocytic recycling of LDL receptors. The polypeptide is Coatomer subunit delta (Arcn1) (Mus musculus (Mouse)).